We begin with the raw amino-acid sequence, 615 residues long: Homologous recombination OB-fold protein (615 aa).

Disordered stretches follow at residues 42 to 75 (LRPV…PRLC), 213 to 326 (PWPS…PVTQ), and 546 to 590 (DFLE…FPEE). S47 is modified (phosphoserine). Composition is skewed to polar residues over residues 47 to 71 (SRPQ…NQSV), 232 to 241 (SCVSTSQQRG), and 257 to 275 (IRSS…SPRA). Residues 302 to 317 (SSRAPVSSVESPVSTP) are compositionally biased toward low complexity.

As to quaternary structure, interacts with MCM8; this interaction is necessary for MCM8-MCM9 helicase complex recruitment to DNA damage sites. Interacts with RPA1; this interaction associates HROB with the RPA complex.

The protein resides in the nucleus. The protein localises to the chromosome. In terms of biological role, DNA-binding protein involved in homologous recombination that acts by recruiting the MCM8-MCM9 helicase complex to sites of DNA damage to promote DNA repair synthesis. This is Homologous recombination OB-fold protein from Mus musculus (Mouse).